Consider the following 971-residue polypeptide: Reversion-inducing cysteine-rich protein with Kazal motifs (971 aa).

An N-terminal signal peptide occupies residues 1 to 22 (MASVRASPRSALLLLLAAAGVA). One copy of the Knot 1 repeat lies at 37 to 84 (CCNHSKDNQMCRDVCEQIFSSKSESRLKHLLQRAPDYCPETMVEIWSC). The 5 X Knot repeats stretch occupies residues 37–338 (CCNHSKDNQM…NPVEVSMLTC (302 aa)). 2 N-linked (GlcNAc...) asparagine glycosylation sites follow: asparagine 39 and asparagine 86. 2 Knot repeats span residues 104–141 (CCELAIGLECRQACKQASSKNDISKVCRKEYENALFSC) and 151–197 (CCSY…LIHC). An N-linked (GlcNAc...) asparagine glycan is attached at asparagine 200. 2 Knot repeats span residues 216–263 (CCDR…LWQC) and 292–338 (CCSK…MLTC). N-linked (GlcNAc...) asparagine glycans are attached at residues asparagine 297 and asparagine 352. Kazal-like domains follow at residues 627 to 673 (TFTG…PCIS), 698 to 752 (TFDK…PCQP), and 753 to 789 (FCRAKEPVCGHNGETYSSVCAAYSDRVAVDYYGPCQA). Cystine bridges form between cysteine 633–cysteine 658, cysteine 635–cysteine 654, cysteine 643–cysteine 671, cysteine 716–cysteine 735, cysteine 724–cysteine 750, and cysteine 761–cysteine 787. In terms of domain architecture, Kazal-like 2; degenerate spans 704 to 750 (CSQYECVPRQLTCDQARDPVCDTDHMEHSNLCTLYQRGKSLSYRGPC). Serine 942 carries the GPI-anchor amidated serine lipid modification. Residues 943–971 (SAVVGRPLFHSLLLLLSLGLTVHLLWTRP) constitute a propeptide, removed in mature form.

The protein belongs to the RECK family. Interacts (via knot repeats) with WNT7A (via disordered linker region); the interaction is direct. Interacts (via knot repeats) with WNT7B (via disordered linker region); the interaction is direct. Interacts with ADGRA2; the interaction is direct. Interacts with MMP9.

Its subcellular location is the cell membrane. Its function is as follows. Functions together with ADGRA2 to enable brain endothelial cells to selectively respond to Wnt7 signals (WNT7A or WNT7B). Plays a key role in Wnt7-specific responses: required for central nervous system (CNS) angiogenesis and blood-brain barrier regulation. Acts as a Wnt7-specific coactivator of canonical Wnt signaling by decoding Wnt ligands: acts by interacting specifically with the disordered linker region of Wnt7, thereby conferring ligand selectivity for Wnt7. ADGRA2 is then required to deliver RECK-bound Wnt7 to frizzled by assembling a higher-order RECK-ADGRA2-Fzd-LRP5-LRP6 complex. Also acts as a serine protease inhibitor: negatively regulates matrix metalloproteinase-9 (MMP9) by suppressing MMP9 secretion and by direct inhibition of its enzymatic activity. Also inhibits metalloproteinase activity of MMP2 and MMP14 (MT1-MMP). This chain is Reversion-inducing cysteine-rich protein with Kazal motifs, found in Mus musculus (Mouse).